Consider the following 551-residue polypeptide: Protein GPR107 (551 aa).

Positions 1-33 (MAVPVPLGRFGSFCLRLLRLLALLELLVHPVLG) are cleaved as a signal peptide. The Extracellular segment spans residues 40–262 (LKDDVRHKVH…YLSAGEIPLP (223 aa)). N-linked (GlcNAc...) asparagine glycosylation is found at N64 and N209. C106 and C226 are disulfide-bonded. A helical membrane pass occupies residues 263 to 283 (KLYVSMALFFFLSGTIWIHIL). Residues 284-292 (RKRRNDVFK) are Cytoplasmic-facing. The helical transmembrane segment at 293-313 (IHWLMAALPFTKSLSLVFHAI) threads the bilayer. The Extracellular portion of the chain corresponds to 314–336 (DYHYISSQGFPIEGWAVVYYITH). Residues 337–357 (LLKGALLFITIALIGTGWAFI) traverse the membrane as a helical segment. Topologically, residues 358–367 (KHILSDKDKK) are cytoplasmic. Residues 368-388 (IFMIVIPLQVLANVAYIIIES) traverse the membrane as a helical segment. The Extracellular segment spans residues 389 to 401 (TEEGTTEYGLWKD). Residues 402–422 (SLFLVDLLCCGAILFPVVWSI) form a helical membrane-spanning segment. The Cytoplasmic portion of the chain corresponds to 423–449 (RHLQEASATDGKAAINLAKLRLFRHYY). The helical transmembrane segment at 450-470 (VLIVCYIYFTRIIAFLLKFAV) threads the bilayer. Residues 471 to 475 (PFQWK) are Extracellular-facing. Residues 476–495 (WLYQLLDETATLVFFVLTGY) form a helical membrane-spanning segment. Topologically, residues 496-551 (KFRPASDNPYLQLSQEDDDLEMESVVTTSGVMENMKKVKKVSNGAVEPQGSWEGTA) are cytoplasmic. S537 carries the post-translational modification Phosphoserine.

This sequence belongs to the LU7TM family. In terms of processing, cleaved by FURIN to yield two fragments that remain associated via a disulfide bond.

The protein localises to the cell membrane. It localises to the golgi apparatus. Its subcellular location is the trans-Golgi network membrane. Functionally, has been proposed to act as a receptor for neuronostatin, a peptide derived from the somatostatin/SST precursor. Involved in blood sugar regulation through the induction of glucagon in response to low glucose. The sequence is that of Protein GPR107 (Gpr107) from Mus musculus (Mouse).